The primary structure comprises 262 residues: Ribosomal RNA small subunit methyltransferase A (262 aa).

Residues N14, L16, G41, E62, D87, and N109 each contribute to the S-adenosyl-L-methionine site.

Belongs to the class I-like SAM-binding methyltransferase superfamily. rRNA adenine N(6)-methyltransferase family. RsmA subfamily.

The protein localises to the cytoplasm. It catalyses the reaction adenosine(1518)/adenosine(1519) in 16S rRNA + 4 S-adenosyl-L-methionine = N(6)-dimethyladenosine(1518)/N(6)-dimethyladenosine(1519) in 16S rRNA + 4 S-adenosyl-L-homocysteine + 4 H(+). Its function is as follows. Specifically dimethylates two adjacent adenosines (A1518 and A1519) in the loop of a conserved hairpin near the 3'-end of 16S rRNA in the 30S particle. May play a critical role in biogenesis of 30S subunits. The protein is Ribosomal RNA small subunit methyltransferase A of Francisella tularensis subsp. holarctica (strain FTNF002-00 / FTA).